Consider the following 146-residue polypeptide: NADH-quinone oxidoreductase subunit A (146 aa).

Transmembrane regions (helical) follow at residues 4-24 (IYHWGLIAFIVGILFLCVFML), 63-83 (LIAMFFVIFDVEGIYVYAWAI), and 91-111 (IGFSEIFIFIFILLVSLIYLI).

The protein belongs to the complex I subunit 3 family. NDH-1 is composed of 13 different subunits. Subunits NuoA, H, J, K, L, M, N constitute the membrane sector of the complex.

It is found in the cell inner membrane. The catalysed reaction is a quinone + NADH + 5 H(+)(in) = a quinol + NAD(+) + 4 H(+)(out). In terms of biological role, NDH-1 shuttles electrons from NADH, via FMN and iron-sulfur (Fe-S) centers, to quinones in the respiratory chain. The immediate electron acceptor for the enzyme in this species is believed to be ubiquinone. Couples the redox reaction to proton translocation (for every two electrons transferred, four hydrogen ions are translocated across the cytoplasmic membrane), and thus conserves the redox energy in a proton gradient. The chain is NADH-quinone oxidoreductase subunit A from Blochmanniella pennsylvanica (strain BPEN).